We begin with the raw amino-acid sequence, 396 residues long: 1-deoxy-D-xylulose 5-phosphate reductoisomerase (396 aa).

NADPH is bound by residues T17, G18, S19, I20, N47, and N130. Position 131 (K131) interacts with 1-deoxy-D-xylulose 5-phosphate. E132 lines the NADPH pocket. D156 lines the Mn(2+) pocket. Positions 157, 158, 182, and 205 each coordinate 1-deoxy-D-xylulose 5-phosphate. A Mn(2+)-binding site is contributed by E158. G211 provides a ligand contact to NADPH. Residues S218, N223, K224, and E227 each contribute to the 1-deoxy-D-xylulose 5-phosphate site. E227 lines the Mn(2+) pocket.

This sequence belongs to the DXR family. Mg(2+) is required as a cofactor. The cofactor is Mn(2+).

It catalyses the reaction 2-C-methyl-D-erythritol 4-phosphate + NADP(+) = 1-deoxy-D-xylulose 5-phosphate + NADPH + H(+). It functions in the pathway isoprenoid biosynthesis; isopentenyl diphosphate biosynthesis via DXP pathway; isopentenyl diphosphate from 1-deoxy-D-xylulose 5-phosphate: step 1/6. In terms of biological role, catalyzes the NADPH-dependent rearrangement and reduction of 1-deoxy-D-xylulose-5-phosphate (DXP) to 2-C-methyl-D-erythritol 4-phosphate (MEP). This is 1-deoxy-D-xylulose 5-phosphate reductoisomerase from Rhizobium johnstonii (strain DSM 114642 / LMG 32736 / 3841) (Rhizobium leguminosarum bv. viciae).